A 337-amino-acid chain; its full sequence is tRNA N6-adenosine threonylcarbamoyltransferase (337 aa).

Fe cation is bound by residues His-114 and His-118. Substrate contacts are provided by residues 136 to 140 (LVSGG), Asp-169, Gly-182, Asp-186, and Asn-275. Asp-301 serves as a coordination point for Fe cation.

Belongs to the KAE1 / TsaD family. Fe(2+) serves as cofactor.

It localises to the cytoplasm. The enzyme catalyses L-threonylcarbamoyladenylate + adenosine(37) in tRNA = N(6)-L-threonylcarbamoyladenosine(37) in tRNA + AMP + H(+). In terms of biological role, required for the formation of a threonylcarbamoyl group on adenosine at position 37 (t(6)A37) in tRNAs that read codons beginning with adenine. Is involved in the transfer of the threonylcarbamoyl moiety of threonylcarbamoyl-AMP (TC-AMP) to the N6 group of A37, together with TsaE and TsaB. TsaD likely plays a direct catalytic role in this reaction. The protein is tRNA N6-adenosine threonylcarbamoyltransferase of Streptococcus thermophilus (strain ATCC BAA-491 / LMD-9).